Consider the following 396-residue polypeptide: Serine/threonine-protein kinase 32A (396 aa).

Residue Gly2 is the site of N-myristoyl glycine attachment. The Protein kinase domain maps to 23 to 281; sequence FEILRAIGKG…LSDVQNFPYM (259 aa). Residues 29 to 37 and Lys52 each bind ATP; that span reads IGKGSFGKV. Catalysis depends on Asp146, which acts as the Proton acceptor. A disordered region spans residues 373–396; the sequence is KRQPNLALEQTKDPQGEDGQNNNL.

This sequence belongs to the protein kinase superfamily. Ser/Thr protein kinase family. Mg(2+) is required as a cofactor.

The protein localises to the cell membrane. The enzyme catalyses L-seryl-[protein] + ATP = O-phospho-L-seryl-[protein] + ADP + H(+). The catalysed reaction is L-threonyl-[protein] + ATP = O-phospho-L-threonyl-[protein] + ADP + H(+). This chain is Serine/threonine-protein kinase 32A (STK32A), found in Homo sapiens (Human).